The sequence spans 95 residues: Stationary phase-expressed protein 1 (95 aa).

Residues 20–38 form a helical membrane-spanning segment; it reads FRYIMLGLVGAAVVPTAYM.

The protein localises to the mitochondrion membrane. The polypeptide is Stationary phase-expressed protein 1 (SPG1) (Saccharomyces cerevisiae (strain RM11-1a) (Baker's yeast)).